A 346-amino-acid chain; its full sequence is Galanin receptor type 1 (346 aa).

Topologically, residues 1-33 are extracellular; sequence MELAPVNLSEGNGSDPEPPAEPRPLFGIGVENF. N-linked (GlcNAc...) asparagine glycans are attached at residues asparagine 7 and asparagine 12. Residues 34–54 form a helical membrane-spanning segment; it reads ITLVVFGLIFAMGVLGNSLVI. The Cytoplasmic segment spans residues 55–69; that stretch reads TVLARSKPGKPRSTT. Residues 70–90 form a helical membrane-spanning segment; the sequence is NLFILNLSIADLAYLLFCIPF. At 91-108 the chain is on the extracellular side; sequence QATVYALPTWVLGAFICK. A disulfide bridge connects residues cysteine 107 and cysteine 185. Residues 109–130 form a helical membrane-spanning segment; it reads FIHYFFTVSMLVSIFTLAAMSV. The Cytoplasmic portion of the chain corresponds to 131-150; that stretch reads DRYVAIVHSRRSSSLRVSRN. Residues 151–171 traverse the membrane as a helical segment; that stretch reads ALLGVGFIWALSIAMASPVAY. Over 172-196 the chain is Extracellular; that stretch reads YQRLFHRDSNQTFCWEHWPNQLHKK. An N-linked (GlcNAc...) asparagine glycan is attached at asparagine 181. Residues 197–217 traverse the membrane as a helical segment; the sequence is AYVVCTFVFGYLLPLLLICFC. Residues 218–246 lie on the Cytoplasmic side of the membrane; that stretch reads YAKVLNHLHKKLKNMSKKSEASKKKTAQT. A helical membrane pass occupies residues 247–267; the sequence is VLVVVVVFGISWLPHHVIHLW. The Extracellular segment spans residues 268 to 269; it reads AE. A helical transmembrane segment spans residues 270-290; sequence FGAFPLTPASFFFRITAHCLA. Residues 291–346 are Cytoplasmic-facing; it reads YSNSSVNPIIYAFLSENFRKAYKQVFKCRVCNESPHGDAKEKNRIDTPPSTNCTHV. Cysteine 318 carries S-palmitoyl cysteine lipidation. Over residues 326–335 the composition is skewed to basic and acidic residues; that stretch reads HGDAKEKNRI. The tract at residues 326–346 is disordered; that stretch reads HGDAKEKNRIDTPPSTNCTHV.

This sequence belongs to the G-protein coupled receptor 1 family. As to quaternary structure, interacts with GRP39 AND HTR1A. Three cysteine residues are found in the C-terminus, at least one of which may be palmitoylated. As to expression, spinal cord, small intestine, Rin14B insulinoma cells and several brain regions, particularly ventral hippocampus, amygdala, supraoptic nucleus, hypothalamus, thalamus, lateral parabrachial nucleus and locus coeruleus.

It is found in the cell membrane. Functionally, receptor for the hormone galanin. The activity of this receptor is mediated by G proteins that inhibit adenylate cyclase activity. The protein is Galanin receptor type 1 (Galr1) of Rattus norvegicus (Rat).